The sequence spans 309 residues: Elongation factor Ts (309 aa).

Residues 82-85 (TDFV) are involved in Mg(2+) ion dislocation from EF-Tu.

Belongs to the EF-Ts family.

It localises to the cytoplasm. In terms of biological role, associates with the EF-Tu.GDP complex and induces the exchange of GDP to GTP. It remains bound to the aminoacyl-tRNA.EF-Tu.GTP complex up to the GTP hydrolysis stage on the ribosome. The protein is Elongation factor Ts of Rickettsia massiliae (strain Mtu5).